Here is a 137-residue protein sequence, read N- to C-terminus: MVFCVDTSAWHHAARPEVARRWLAALSADQIGICDHVRLEILYSANSATDYDALADELDGLARIPVGAETFTRACQVQRELAHVAGLHHRSVKIADLVIAAAAELSGTIVWHYDENYDRVAAITGQPTEWIVPRGTL.

The 123-residue stretch at 4 to 126 (CVDTSAWHHA…YDRVAAITGQ (123 aa)) folds into the PINc domain. Residues Asp6 and Asp96 each coordinate Mg(2+).

The protein belongs to the PINc/VapC protein family. Mg(2+) is required as a cofactor.

In terms of biological role, toxic component of a type II toxin-antitoxin (TA) system. An RNase. The cognate antitoxin is VapB18. This is Ribonuclease VapC18 from Mycobacterium tuberculosis (strain ATCC 25618 / H37Rv).